Consider the following 323-residue polypeptide: MEILKSMIDPKIVMAIVISFIVASILGPIIIPLLHKLKFGQNIRQEGPKSHLKKAGTPTIGGLIFIFATIITMFVMVGNPTDEAMIALYSFVGFGFVGFLDDLLKIIKKKNEGLTSGQKMILLLIISGFLTWYAYKYIGTSINIPFLNGQINLGLFYIPAAMFYFAGVTNAVNLTDGLDGLATSVTVLVTTFLGIISYNLGHISLAIFCVALAGALLAFLRFNAFPARVFMGDTGSLALGGAVAMVALILKMPLILVLIGIIYVIETLSVILQVASFKLTGKRIFKMAPIHHHFEQLGWSETKIVSVFSIITVVFCFIAFASL.

Helical transmembrane passes span 12–32 (IVMA…IIIP), 58–78 (PTIG…VMVG), 84–104 (AMIA…DDLL), 120–140 (MILL…YIGT), 151–171 (INLG…VTNA), 177–197 (GLDG…GIIS), 200–220 (LGHI…LAFL), 229–250 (VFMG…ALIL), and 303–323 (KIVS…FASL).

The protein belongs to the glycosyltransferase 4 family. MraY subfamily. Requires Mg(2+) as cofactor.

It localises to the cell membrane. The catalysed reaction is UDP-N-acetyl-alpha-D-muramoyl-L-alanyl-gamma-D-glutamyl-meso-2,6-diaminopimeloyl-D-alanyl-D-alanine + di-trans,octa-cis-undecaprenyl phosphate = di-trans,octa-cis-undecaprenyl diphospho-N-acetyl-alpha-D-muramoyl-L-alanyl-D-glutamyl-meso-2,6-diaminopimeloyl-D-alanyl-D-alanine + UMP. It functions in the pathway cell wall biogenesis; peptidoglycan biosynthesis. Its function is as follows. Catalyzes the initial step of the lipid cycle reactions in the biosynthesis of the cell wall peptidoglycan: transfers peptidoglycan precursor phospho-MurNAc-pentapeptide from UDP-MurNAc-pentapeptide onto the lipid carrier undecaprenyl phosphate, yielding undecaprenyl-pyrophosphoryl-MurNAc-pentapeptide, known as lipid I. The chain is Phospho-N-acetylmuramoyl-pentapeptide-transferase from Clostridium perfringens (strain SM101 / Type A).